We begin with the raw amino-acid sequence, 44 residues long: Benzaldehyde dehydrogenase [NAD(+)] II (44 aa).

Belongs to the aldehyde dehydrogenase family.

It catalyses the reaction benzaldehyde + NAD(+) + H2O = benzoate + NADH + 2 H(+). This Acinetobacter guillouiae (Acinetobacter genomosp. 11) protein is Benzaldehyde dehydrogenase [NAD(+)] II.